Here is a 634-residue protein sequence, read N- to C-terminus: Chaperone protein HtpG (634 aa).

The segment at 1-342 is a; substrate-binding; the sequence is MSVETQKETL…SNDLSLNVSR (342 aa). The segment at 343-559 is b; the sequence is EILQKDPVID…EQDLGLQMRQ (217 aa). Residues 560 to 634 form a c region; sequence ILEASGQKVP…LNKLLVELSA (75 aa).

Belongs to the heat shock protein 90 family. Homodimer.

Its subcellular location is the cytoplasm. Its function is as follows. Molecular chaperone. Has ATPase activity. The polypeptide is Chaperone protein HtpG (Pseudomonas aeruginosa (strain ATCC 15692 / DSM 22644 / CIP 104116 / JCM 14847 / LMG 12228 / 1C / PRS 101 / PAO1)).